Reading from the N-terminus, the 130-residue chain is Small ribosomal subunit protein uS9 (130 aa).

This sequence belongs to the universal ribosomal protein uS9 family.

The protein is Small ribosomal subunit protein uS9 of Bordetella bronchiseptica (strain ATCC BAA-588 / NCTC 13252 / RB50) (Alcaligenes bronchisepticus).